Reading from the N-terminus, the 62-residue chain is Photosystem II reaction center protein Z (62 aa).

Transmembrane regions (helical) follow at residues 8–28 (AVFA…VVFA) and 41–61 (FSGT…NSLI).

This sequence belongs to the PsbZ family. In terms of assembly, PSII is composed of 1 copy each of membrane proteins PsbA, PsbB, PsbC, PsbD, PsbE, PsbF, PsbH, PsbI, PsbJ, PsbK, PsbL, PsbM, PsbT, PsbY, PsbZ, Psb30/Ycf12, at least 3 peripheral proteins of the oxygen-evolving complex and a large number of cofactors. It forms dimeric complexes.

It is found in the plastid. Its subcellular location is the chloroplast thylakoid membrane. In terms of biological role, may control the interaction of photosystem II (PSII) cores with the light-harvesting antenna, regulates electron flow through the 2 photosystem reaction centers. PSII is a light-driven water plastoquinone oxidoreductase, using light energy to abstract electrons from H(2)O, generating a proton gradient subsequently used for ATP formation. The polypeptide is Photosystem II reaction center protein Z (Spinacia oleracea (Spinach)).